Consider the following 501-residue polypeptide: Ribonuclease Y (501 aa).

Residues leucine 7 to leucine 27 traverse the membrane as a helical segment. Residues valine 190 to aspartate 256 enclose the KH domain. An HD domain is found at valine 316–glycine 409.

It belongs to the RNase Y family.

The protein localises to the cell membrane. In terms of biological role, endoribonuclease that initiates mRNA decay. This Thermobifida fusca (strain YX) protein is Ribonuclease Y.